A 98-amino-acid chain; its full sequence is Large ribosomal subunit protein uL23 (98 aa).

The protein belongs to the universal ribosomal protein uL23 family. In terms of assembly, part of the 50S ribosomal subunit. Contacts protein L29, and trigger factor when it is bound to the ribosome.

Its function is as follows. One of the early assembly proteins it binds 23S rRNA. One of the proteins that surrounds the polypeptide exit tunnel on the outside of the ribosome. Forms the main docking site for trigger factor binding to the ribosome. This is Large ribosomal subunit protein uL23 from Teredinibacter turnerae (strain ATCC 39867 / T7901).